A 285-amino-acid polypeptide reads, in one-letter code: E2F-associated phosphoprotein (285 aa).

The residue at position 1 (Met-1) is an N-acetylmethionine. Residues 1–30 (MNRLPDDYDPYAVEEPSDEEPALSSSEDEV) are disordered. Residues 15-30 (EPSDEEPALSSSEDEV) are compositionally biased toward acidic residues. Ser-17 carries the phosphoserine modification. At Thr-37 the chain carries Phosphothreonine. The tract at residues 48–96 (CLTGESESSSEDEFEKEMEAELNSTMKTMEDKLSSLGTGSSSGNGKVAT) is disordered. The span at 55-67 (SSSEDEFEKEMEA) shows a compositional bias: acidic residues. Over residues 81-92 (SSLGTGSSSGNG) the composition is skewed to low complexity. 2 positions are modified to phosphoserine: Ser-109 and Ser-111. The disordered stretch occupies residues 118-144 (VQVTKKKKKKQHKIPTNDELLYDPEKD). Residues 121–130 (TKKKKKKQHK) are compositionally biased toward basic residues.

As to quaternary structure, interacts with E2F1. The C-terminal half binds the N-terminal of E2F1. Also interacts with E2F2 and E2F3, but not E2F4. In terms of tissue distribution, ubiquitously expressed. Highest levels in heart, placenta, skeletal muscle and pancreas. Lower levels in brain, lung and kidney. In the brain, expressed in all regions with high levels in the cerebellum and cerebral cortex. Expressed in COS1 and transformed skin fibroblasts.

Its subcellular location is the cytoplasm. It is found in the nucleus. Its function is as follows. May play an important role in the fine-tuning of both major E2F1 activities, the regulation of the cell-cycle and the induction of apoptosis. Promotes S-phase entry, and inhibits p14(ARP) expression. In Homo sapiens (Human), this protein is E2F-associated phosphoprotein (EAPP).